Consider the following 734-residue polypeptide: Photosystem I P700 chlorophyll a apoprotein A2 (734 aa).

8 helical membrane passes run 46–69, 135–158, 175–199, 273–291, 330–353, 369–395, 417–439, and 517–535; these read IFAS…FHVA, LYTG…LHLQ, LNHH…HVAI, VAHH…GLMY, IHFQ…QHMY, AALY…IFFI, AIIS…LYVH, and FLVH…LILV. Residues Cys559 and Cys568 each coordinate [4Fe-4S] cluster. The next 2 helical transmembrane spans lie at 575-596 and 643-665; these read DFYL…YWHW and LSVW…MFLI. The chlorophyll a site is built by His654, Met662, and Tyr670. Trp671 is a binding site for phylloquinone. A helical membrane pass occupies residues 707–727; sequence LVGLVHFSVGYIFTYAAFLIA.

This sequence belongs to the PsaA/PsaB family. As to quaternary structure, the PsaA/B heterodimer binds the P700 chlorophyll special pair and subsequent electron acceptors. PSI consists of a core antenna complex that captures photons, and an electron transfer chain that converts photonic excitation into a charge separation. The eukaryotic PSI reaction center is composed of at least 11 subunits. The cofactor is P700 is a chlorophyll a/chlorophyll a' dimer, A0 is one or more chlorophyll a, A1 is one or both phylloquinones and FX is a shared 4Fe-4S iron-sulfur center..

It is found in the plastid. The protein localises to the chloroplast thylakoid membrane. The enzyme catalyses reduced [plastocyanin] + hnu + oxidized [2Fe-2S]-[ferredoxin] = oxidized [plastocyanin] + reduced [2Fe-2S]-[ferredoxin]. PsaA and PsaB bind P700, the primary electron donor of photosystem I (PSI), as well as the electron acceptors A0, A1 and FX. PSI is a plastocyanin-ferredoxin oxidoreductase, converting photonic excitation into a charge separation, which transfers an electron from the donor P700 chlorophyll pair to the spectroscopically characterized acceptors A0, A1, FX, FA and FB in turn. Oxidized P700 is reduced on the lumenal side of the thylakoid membrane by plastocyanin. The chain is Photosystem I P700 chlorophyll a apoprotein A2 from Pisum sativum (Garden pea).